A 78-amino-acid chain; its full sequence is Translational regulator CsrA (78 aa).

This sequence belongs to the CsrA/RsmA family. As to quaternary structure, homodimer; the beta-strands of each monomer intercalate to form a hydrophobic core, while the alpha-helices form wings that extend away from the core.

Its subcellular location is the cytoplasm. A translational regulator that binds mRNA to regulate translation initiation and/or mRNA stability. Usually binds in the 5'-UTR at or near the Shine-Dalgarno sequence preventing ribosome-binding, thus repressing translation. Its main target seems to be the major flagellin gene, while its function is anatagonized by FliW. This is Translational regulator CsrA from Desulfovibrio desulfuricans (strain ATCC 27774 / DSM 6949 / MB).